Reading from the N-terminus, the 314-residue chain is Olfactory receptor 9A1 (314 aa).

The Extracellular segment spans residues 1–24 (MLGNYSSATEFFLLGFPGSQEVCR). N-linked (GlcNAc...) asparagine glycosylation is present at Asn-4. A helical membrane pass occupies residues 25–45 (ILFATFFLLYAVTVMGNVVII). At 46–64 (ITVCVDKCLQSPIYFFLGH) the chain is on the cytoplasmic side. A helical membrane pass occupies residues 65–85 (LCVLEILITSTAVPFMLWGLL). Residues 86 to 99 (LPSTQIMSLTACAA) are Extracellular-facing. The cysteines at positions 97 and 179 are disulfide-linked. Residues 100-120 (QLYLYLSLGTLELALMGVMAV) traverse the membrane as a helical segment. Topologically, residues 121-140 (DRYVAVCNPLRYNIIMNSST) are cytoplasmic. A helical membrane pass occupies residues 141–161 (FIWVIIVSWVLGFLSEIWPVY). The Extracellular segment spans residues 162–196 (ATFQLTFCKSSVLDHFYCDRGQLLKVSCEDTLFRE). A helical membrane pass occupies residues 197–217 (FILFLMAVFIIIGSLIPTIVS). The Cytoplasmic segment spans residues 218–239 (YTYIISTNLKIPSASGWRKSFS). The chain crosses the membrane as a helical span at residues 240–260 (TCASHFTYVVIGYGSCLFLYV). Over 261–271 (KPKQTQAAEYN) the chain is Extracellular. A helical transmembrane segment spans residues 272-292 (RVVSLLVLVVTPFLNPFIFTL). Residues 293-314 (RNDKFIQAFGDGMKHCYKLLKN) lie on the Cytoplasmic side of the membrane.

It belongs to the G-protein coupled receptor 1 family.

The protein resides in the cell membrane. Functionally, odorant receptor. The chain is Olfactory receptor 9A1 (OR9A1P) from Homo sapiens (Human).